The chain runs to 472 residues: Serine/threonine-protein kinase sax-1 (472 aa).

A Protein kinase domain is found at 87–381; that stretch reads FESLKVIGRG…LDEIKQCPFF (295 aa). Residues 93 to 101 and lysine 116 each bind ATP; that span reads IGRGAFGEV. The active-site Proton acceptor is aspartate 210. The AGC-kinase C-terminal domain maps to 382 to 452; it reads RRIDWNHIRE…KRFDGLTQKM (71 aa).

It belongs to the protein kinase superfamily. AGC Ser/Thr protein kinase family. Requires Mg(2+) as cofactor.

Its subcellular location is the cytoplasm. It is found in the nucleus. The catalysed reaction is L-seryl-[protein] + ATP = O-phospho-L-seryl-[protein] + ADP + H(+). It catalyses the reaction L-threonyl-[protein] + ATP = O-phospho-L-threonyl-[protein] + ADP + H(+). Acts with sax-2 to restrict the growth of both primary and secondary neurites. Regulates mechanosensory tiling by controlling the termination point of sensory dendrites. The polypeptide is Serine/threonine-protein kinase sax-1 (Caenorhabditis briggsae).